Reading from the N-terminus, the 360-residue chain is Peptide chain release factor 1 (360 aa).

Gln237 bears the N5-methylglutamine mark.

It belongs to the prokaryotic/mitochondrial release factor family. Post-translationally, methylated by PrmC. Methylation increases the termination efficiency of RF1.

Its subcellular location is the cytoplasm. Its function is as follows. Peptide chain release factor 1 directs the termination of translation in response to the peptide chain termination codons UAG and UAA. In Pseudomonas syringae pv. tomato (strain ATCC BAA-871 / DC3000), this protein is Peptide chain release factor 1.